A 321-amino-acid chain; its full sequence is Glycerol-3-phosphate dehydrogenase [NAD(P)+] (321 aa).

W15, R35, and K101 together coordinate NADPH. Sn-glycerol 3-phosphate-binding residues include K101 and G129. A133 is an NADPH binding site. Sn-glycerol 3-phosphate-binding residues include K184, D237, S247, R248, and N249. K184 acts as the Proton acceptor in catalysis. R248 contacts NADPH. NADPH-binding residues include V268 and E270.

This sequence belongs to the NAD-dependent glycerol-3-phosphate dehydrogenase family.

It localises to the cytoplasm. It carries out the reaction sn-glycerol 3-phosphate + NAD(+) = dihydroxyacetone phosphate + NADH + H(+). The catalysed reaction is sn-glycerol 3-phosphate + NADP(+) = dihydroxyacetone phosphate + NADPH + H(+). The protein operates within membrane lipid metabolism; glycerophospholipid metabolism. Functionally, catalyzes the reduction of the glycolytic intermediate dihydroxyacetone phosphate (DHAP) to sn-glycerol 3-phosphate (G3P), the key precursor for phospholipid synthesis. In Acidiphilium cryptum (strain JF-5), this protein is Glycerol-3-phosphate dehydrogenase [NAD(P)+].